The chain runs to 614 residues: tRNA uridine 5-carboxymethylaminomethyl modification enzyme MnmG (614 aa).

10 to 15 contacts FAD; the sequence is GAGHAG. An NAD(+)-binding site is contributed by 271 to 285; the sequence is GPRYCPSIEDKIVKF.

The protein belongs to the MnmG family. Homodimer. Heterotetramer of two MnmE and two MnmG subunits. FAD serves as cofactor.

It localises to the cytoplasm. Its function is as follows. NAD-binding protein involved in the addition of a carboxymethylaminomethyl (cmnm) group at the wobble position (U34) of certain tRNAs, forming tRNA-cmnm(5)s(2)U34. The sequence is that of tRNA uridine 5-carboxymethylaminomethyl modification enzyme MnmG from Ureaplasma urealyticum serovar 10 (strain ATCC 33699 / Western).